The sequence spans 238 residues: uncharacterized protein (238 aa).

This is an uncharacterized protein from Acheta domesticus (House cricket).